Reading from the N-terminus, the 353-residue chain is Trans-enoyl reductase fsa3 (353 aa).

45–48 (VDTK) contributes to the NADP(+) binding site. A substrate-binding site is contributed by 131-138 (ISFMTTGL). NADP(+) contacts are provided by residues 166–169 (SSAT), 189–192 (SPRN), Tyr207, and 254–255 (LE). Substrate is bound at residue 275–279 (GPQML). 344–345 (IS) contributes to the NADP(+) binding site.

The protein belongs to the zinc-containing alcohol dehydrogenase family. Monomer.

It carries out the reaction L-serine + 7 malonyl-CoA + acetyl-CoA + 2 S-adenosyl-L-methionine + ATP + 8 NADPH + 11 H(+) = (5S)-3-[(2E,6R,8E,10E,12E)-2,6-dimethyltetradeca-2,8,10,12-tetraenoyl]-5-(hydroxymethyl)pyrrolidine-2,4-dione + AMP + 2 S-adenosyl-L-homocysteine + 7 CO2 + diphosphate + 8 NADP(+) + 8 CoA + 6 H2O. It participates in mycotoxin biosynthesis. Trans-enoyl reductase; part of the gene cluster that mediates the biosynthesis of HIV-1 integrase inhibitor equisetin and of fusarisetin A, both trans-fused decalin-containing tetramic acids showing also antimicrobial activity. The PKS module of fsa1 together with the enoylreductase fsa3 catalyze the formation of the polyketide unit which is then conjugated to L-serine by the condensation domain of the fsa1 NRPS module. Activity of the Dieckmann cyclase domain (RED) results in release of the Dieckmann product intermediate. Diels-Alderase fsa2 is involved in endo-selective Diels-Alder cycloaddition to form the decalin ring, leading to the production of N-desmethylequisetin also called trichosetin. Subsequent N-methylation is carried out by fsa4 to give equisetin. The enzymatic gene responsible for the conversion of equisetin to fusarisetin A has not been identified yet and is probably located outside of the fsa cluster. The chain is Trans-enoyl reductase fsa3 from Fusarium sp. (strain FN080326).